We begin with the raw amino-acid sequence, 579 residues long: MGTWKNKNSNKKNRVSYISVPAQIINSVSSSSLHKFLDNKSSKKNTSKFFFNLRNPKLWAFSLFLLSILGISLRLGLCLSHFGSGDHESQLQSSDSNGSPKSHMGFAYIRSSTTQVEISNAKDRSLDMGVEKNETFGGHQSHLIIPNGNGHDDKNYDFWKQPDGLGYKPCLDFSIEYRRESKKILVERRKYLMVVVSGGLNQQKIQIVDAVVIARILGAVLVVPILQINLIWGDESEFSDIFDLEQFKSVLANDVKIVSLLPASKVMTRPSEDGSMPFNASPQWIRSHYPKRFNREGVLLLRRLDSRLSKDLPSDLQKLRCKVAFEALKFSPRVMEMGTKLAERMRSKGPYIALHLRMEKDVWVRTGCLSGLSSKYDEIVNIERIKRPELLTAKSSMTSNERKLAGLCPLNAKEVTRLLRALGAPRDARIYWAGGEPLGGKEALKPLTSEFPHLYNKYDIALPLELKPFAKRASIMAAIDYIVCKESDVFMASHGGNMGHAIQGHRAYEGHKKIITPNKRHMLPYFVNSSLTETEFEKMIKKLHRQSLGQPELRISKAGRDVTKYPVPECMCNQSNTTI.

A helical; Signal-anchor for type II membrane protein transmembrane segment spans residues 58 to 78 (LWAFSLFLLSILGISLRLGLC). N-linked (GlcNAc...) asparagine glycosylation is present at asparagine 133. A substrate-binding site is contributed by 355–357 (HLR). Asparagine 528, asparagine 573, and asparagine 576 each carry an N-linked (GlcNAc...) asparagine glycan.

The protein belongs to the glycosyltransferase GT106 family.

The protein resides in the membrane. It functions in the pathway glycan metabolism. The sequence is that of O-fucosyltransferase 24 from Arabidopsis thaliana (Mouse-ear cress).